A 114-amino-acid chain; its full sequence is Iron-sulfur cluster insertion protein ErpA (114 aa).

Iron-sulfur cluster contacts are provided by Cys-42, Cys-106, and Cys-108.

It belongs to the HesB/IscA family. In terms of assembly, homodimer. Requires iron-sulfur cluster as cofactor.

Its function is as follows. Required for insertion of 4Fe-4S clusters for at least IspG. This is Iron-sulfur cluster insertion protein ErpA from Serratia proteamaculans (strain 568).